The primary structure comprises 91 residues: ATP-dependent Clp protease adapter protein ClpS (91 aa).

The protein belongs to the ClpS family. Binds to the N-terminal domain of the chaperone ClpA.

Involved in the modulation of the specificity of the ClpAP-mediated ATP-dependent protein degradation. The protein is ATP-dependent Clp protease adapter protein ClpS of Synechococcus sp. (strain ATCC 27144 / PCC 6301 / SAUG 1402/1) (Anacystis nidulans).